Consider the following 192-residue polypeptide: Fe/S biogenesis protein NfuA (192 aa).

[4Fe-4S] cluster contacts are provided by Cys-149 and Cys-152.

The protein belongs to the NfuA family. Homodimer. [4Fe-4S] cluster is required as a cofactor.

In terms of biological role, involved in iron-sulfur cluster biogenesis. Binds a 4Fe-4S cluster, can transfer this cluster to apoproteins, and thereby intervenes in the maturation of Fe/S proteins. Could also act as a scaffold/chaperone for damaged Fe/S proteins. In Shewanella piezotolerans (strain WP3 / JCM 13877), this protein is Fe/S biogenesis protein NfuA.